A 189-amino-acid polypeptide reads, in one-letter code: MQRLWVTGYRSYELNVFGDKDPKIIIIKYALKNYFKGLLENDQLDWIITGANLGVEQWTAEVGLELGQKYPLRTSIMIPYEKFADRWNENNQTKFLNLKERVDFFASTSNLPYQNPVQLRNYQNFMLQHTDRALMVYDTEHPGKSKYDYNLIQKYQKAEEYPLDLIDFYDLQDVAEEYQEAHQRNYFSE.

Belongs to the UPF0398 family.

This is UPF0398 protein lhv_1265 from Lactobacillus helveticus (strain DPC 4571).